The following is a 200-amino-acid chain: dITP/XTP pyrophosphatase (200 aa).

Position 7–12 (7–12 (SNNYHK)) interacts with substrate. The Proton acceptor role is filled by Asp68. Position 68 (Asp68) interacts with Mg(2+). Substrate contacts are provided by residues Ser69, 147–150 (FGYD), Lys170, and 175–176 (HR).

The protein belongs to the HAM1 NTPase family. Homodimer. Mg(2+) is required as a cofactor.

It carries out the reaction XTP + H2O = XMP + diphosphate + H(+). The enzyme catalyses dITP + H2O = dIMP + diphosphate + H(+). The catalysed reaction is ITP + H2O = IMP + diphosphate + H(+). Its function is as follows. Pyrophosphatase that catalyzes the hydrolysis of nucleoside triphosphates to their monophosphate derivatives, with a high preference for the non-canonical purine nucleotides XTP (xanthosine triphosphate), dITP (deoxyinosine triphosphate) and ITP. Seems to function as a house-cleaning enzyme that removes non-canonical purine nucleotides from the nucleotide pool, thus preventing their incorporation into DNA/RNA and avoiding chromosomal lesions. This chain is dITP/XTP pyrophosphatase, found in Acholeplasma laidlawii (strain PG-8A).